Here is a 122-residue protein sequence, read N- to C-terminus: Large ribosomal subunit protein uL14 (122 aa).

The protein belongs to the universal ribosomal protein uL14 family. Part of the 50S ribosomal subunit. Forms a cluster with proteins L3 and L19. In the 70S ribosome, L14 and L19 interact and together make contacts with the 16S rRNA in bridges B5 and B8.

In terms of biological role, binds to 23S rRNA. Forms part of two intersubunit bridges in the 70S ribosome. In Symbiobacterium thermophilum (strain DSM 24528 / JCM 14929 / IAM 14863 / T), this protein is Large ribosomal subunit protein uL14.